The sequence spans 248 residues: Myelin protein P0 (248 aa).

The N-terminal stretch at 1-29 (MAPGAPSSSPSPILAALLFSSLVLSPAQA) is a signal peptide. The 114-residue stretch at 30 to 143 (IVVYTDKEVY…DIVGKTSQVT (114 aa)) folds into the Ig-like V-type domain. The Extracellular segment spans residues 30 to 153 (IVVYTDKEVY…LYVFEKVPTR (124 aa)). Cysteine 50 and cysteine 127 are oxidised to a cystine. Residue asparagine 122 is glycosylated (N-linked (GlcNAc...) (complex) asparagine). A helical transmembrane segment spans residues 154–179 (YGVVLGAVIGGVLGVVLLVLLLFYVV). Residues 180–248 (RYCWLRRQAA…GLGESRKDKK (69 aa)) are Cytoplasmic-facing. Residue serine 210 is modified to Phosphoserine; by PKC. Positions 222–248 (MLDHSRSTKAASEKKAKGLGESRKDKK) are disordered. Positions 224-248 (DHSRSTKAASEKKAKGLGESRKDKK) are enriched in basic and acidic residues. Phosphoserine occurs at positions 226 and 228. A phosphoserine; by PKC mark is found at serine 233 and serine 243.

The protein belongs to the myelin P0 protein family. Homodimer and homotetramer. In terms of processing, N-glycosylated; contains sulfate-substituted glycan.

The protein localises to the cell membrane. In terms of biological role, is an adhesion molecule necessary for normal myelination in the peripheral nervous system. It mediates adhesion between adjacent myelin wraps and ultimately drives myelin compaction. The protein is Myelin protein P0 (MPZ) of Equus caballus (Horse).